The chain runs to 431 residues: MSTQHGPKSTRTNDLYELAVNISSTVEAFVGRLDAIGAERPNLDNPFPEIIQDEGAQLARLKILRLCERLMALVQGPVQWLMFQNMAFLDAACVGAILDMGIHDIIAPGPEPTSLDQIVEATGASKDILKRIMRVCTQRLVFDEIAPEQFIHNGVSLQFLAPPVQALISHACDDGLRMAAHFTDSLKKTDWKGSDDPENTAFSLAFNTNKGLFDYFYTEDLARGQRFALGMAGSEIMKTLTEDMFPFESLPQGAKVVDVGGGRGHVSVRIAEKVPGLNFVVQDDESMLEAGQAEGVPKAVKDRIEFMPHDFFNEQPVKGADVYLLRFILHDHSDSRCAKILSNIVDAMEPGKSRILIDDAIVPSFLGPESSRFFNLLDLYMLAGLNGKERTLEQWNYLIQMVSPKLVLEKVWKTPNGGPESGTILELRLQE.

Asp-283 is a binding site for S-adenosyl-L-methionine. The active-site Proton acceptor is the His-330.

It belongs to the class I-like SAM-binding methyltransferase superfamily. Cation-independent O-methyltransferase family.

The protein operates within secondary metabolite biosynthesis. In terms of biological role, O-methyltransferase; part of the gene cluster that mediates the biosynthesis of the isocyanide xanthocillin and its derivatives. The first step of the pathway consists in the conversion of tyrosine into a vinyl-isonitrile intermediate by the isocyanide synthase xanB. Subsequent oxidative dimerization of this intermediate to form xanthocillin may involve the cytochrome P450 monooxygenase xanG, whose expression is coregulated with that of XanB. Xanthocillin can be further modified by the isonitrile hydratase-like protein xanA which introduces N-formyl groups and the methyltransferase xanE which introduces methyl groups, leading to the production of several derivatives including fumiformamide. Finally, fumiformamide can be subject to both oxidative and reductive cyclization to yield melanocins E and F, respectively. This chain is O-methyltransferase xanE, found in Aspergillus fumigatus (strain ATCC MYA-4609 / CBS 101355 / FGSC A1100 / Af293) (Neosartorya fumigata).